A 121-amino-acid polypeptide reads, in one-letter code: Small ribosomal subunit protein uS13 (121 aa).

The interval 97 to 121 is disordered; the sequence is VRGQRTRTNARTRRGARKTVAGRKK. The span at 100–121 shows a compositional bias: basic residues; it reads QRTRTNARTRRGARKTVAGRKK.

Belongs to the universal ribosomal protein uS13 family. In terms of assembly, part of the 30S ribosomal subunit. Forms a loose heterodimer with protein S19. Forms two bridges to the 50S subunit in the 70S ribosome.

Located at the top of the head of the 30S subunit, it contacts several helices of the 16S rRNA. In the 70S ribosome it contacts the 23S rRNA (bridge B1a) and protein L5 of the 50S subunit (bridge B1b), connecting the 2 subunits; these bridges are implicated in subunit movement. Contacts the tRNAs in the A and P-sites. The sequence is that of Small ribosomal subunit protein uS13 from Prochlorococcus marinus (strain NATL1A).